Here is a 548-residue protein sequence, read N- to C-terminus: Membrane protein insertase YidC (548 aa).

Transmembrane regions (helical) follow at residues 6–26 (NLIL…WESD), 357–377 (NWGV…FPLT), 424–444 (LGGC…YWAL), 455–475 (FALW…PILM), and 503–523 (PIIF…YWLV).

It belongs to the OXA1/ALB3/YidC family. Type 1 subfamily. Interacts with the Sec translocase complex via SecD. Specifically interacts with transmembrane segments of nascent integral membrane proteins during membrane integration.

The protein resides in the cell inner membrane. In terms of biological role, required for the insertion and/or proper folding and/or complex formation of integral membrane proteins into the membrane. Involved in integration of membrane proteins that insert both dependently and independently of the Sec translocase complex, as well as at least some lipoproteins. Aids folding of multispanning membrane proteins. The sequence is that of Membrane protein insertase YidC from Aeromonas hydrophila subsp. hydrophila (strain ATCC 7966 / DSM 30187 / BCRC 13018 / CCUG 14551 / JCM 1027 / KCTC 2358 / NCIMB 9240 / NCTC 8049).